The primary structure comprises 266 residues: MEWFEALILGLIQGLTEYLPVSSSGHLAIGSALFGIEGEENLAFTIVVHVATVFSTLVILWKEIDWIFRGLFKFEMNSETRYVINILISMLPIGIVGVFFKDEVEAIFGSGLLIVGCMLLLTAALLSFSYYAKPRQKENISMKDAFIIGLAQACAVLPGLSRSGSTIATGLLLGDNKAKLAQFSFLMVIPPILGEALLDGMKMIKGEAIAGDIPTLSLIVGFIAAFVSGCLACKWMINIVKKGKLIYFAIYCAIVGVVTIVVSQLQ.

7 consecutive transmembrane segments (helical) span residues 41–61 (NLAF…VILW), 82–102 (YVIN…FFKD), 106–126 (AIFG…AALL), 140–160 (ISMK…LPGL), 180–200 (LAQF…LLDG), 213–233 (IPTL…CLAC), and 245–265 (LIYF…VSQL).

This sequence belongs to the UppP family.

Its subcellular location is the cell inner membrane. It catalyses the reaction di-trans,octa-cis-undecaprenyl diphosphate + H2O = di-trans,octa-cis-undecaprenyl phosphate + phosphate + H(+). Functionally, catalyzes the dephosphorylation of undecaprenyl diphosphate (UPP). Confers resistance to bacitracin. In Bacteroides fragilis (strain YCH46), this protein is Undecaprenyl-diphosphatase.